The chain runs to 452 residues: Nuclear distribution protein nudF 2 (452 aa).

Residues 76–101 adopt a coiled-coil conformation; the sequence is ALQILDLESKVAGLQAELSSLTLTSR. 7 WD repeats span residues 123–164, 166–206, 210–250, 253–292, 295–355, 357–396, and 401–449; these read SHRD…RTLK, HIRA…ANIR, GHDH…CVKV, SSDA…QKSA, GHEN…IKTL, GHDN…KLVK, and AHSH…SCVR.

This sequence belongs to the WD repeat LIS1/nudF family. In terms of assembly, self-associates. Interacts with nudE and dynein.

The protein localises to the cytoplasm. The protein resides in the cytoskeleton. It is found in the spindle pole. In terms of biological role, positively regulates the activity of the minus-end directed microtubule motor protein dynein. May enhance dynein-mediated microtubule sliding by targeting dynein to the microtubule plus end. Required for nuclear migration during vegetative growth as well as development. Required for retrograde early endosome (EE) transport from the hyphal tip. Required for localization of dynein to the mitotic spindle poles. Recruits additional proteins to the dynein complex at SPBs. The polypeptide is Nuclear distribution protein nudF 2 (Talaromyces marneffei (strain ATCC 18224 / CBS 334.59 / QM 7333) (Penicillium marneffei)).